We begin with the raw amino-acid sequence, 131 residues long: Large ribosomal subunit protein bL12 (131 aa).

Belongs to the bacterial ribosomal protein bL12 family. Homodimer. Part of the ribosomal stalk of the 50S ribosomal subunit. Forms a multimeric L10(L12)X complex, where L10 forms an elongated spine to which 2 to 4 L12 dimers bind in a sequential fashion. Binds GTP-bound translation factors.

In terms of biological role, forms part of the ribosomal stalk which helps the ribosome interact with GTP-bound translation factors. Is thus essential for accurate translation. This is Large ribosomal subunit protein bL12 from Prochlorococcus marinus subsp. pastoris (strain CCMP1986 / NIES-2087 / MED4).